The sequence spans 1123 residues: MPRKPRHRVPEILWRLFGNRARNLNDAIVDLIPNRNIQPEQCRCRGQGCLGCSSDKPAFLLRSDDPIHYRKLLHRCFVVLHEQTPPLLDFSPTSWWSQREIVERIIEMMQSGCDCQNVICARYDKYDQSSPILELLTSSSWEFLLKRVGHDVMVYLLQQTSIFLPLLGKKHQQVSGPPLCIKHKRTLSVHENKRKRDDNVQPPTKRQWLSSAVDDCPKDDSATITPIVGEDVDQHREKKTTKRSRIYLKRRRKQRKVNFKKVDCNAPCITPSTNGKVSTGNDEMNLHIGINGSLTDFVKQAKQVKRNKNFKFGLSETYSVIPPNHILKTLRPNCSDSKLLMNHIFGEVNVWSTTPSHGKGNCPSGSICLYHSLLKSLKNLIGKTKSSHLKMLLDKHCPVLLLQEDALKSGTTSQSSRRQKADKLPHGSSSSQTGKPKCPSVEERKLYCTNDQVVSFIWAICRYIVPESLLGTTHQMRVLRKNIAWFVSRRRNEKCTVNQFLHKVKPSDFPFFARKELCCMVNGHELQSESIRSTQQMLCTKWISWLFLEIVKKLVHFNFYATESQGGRLNIYYYRKRSWERLISKEISKALDGYVLVDDAEAESSRKKLSKFRFLPKANGVRMVLDFSSSSRSQSLRDTHAVLKDIQLKEPDVLGSSVFDHDDFYRNLCPYLIHLRSQSGELPPLYFVVADVFKAFDSVDQGKLLHVIQSFLKDEYILNRCRLVCCGKRSNWVNKILVSSDKNSNFSRFTSTVPYNALQSIVVDKGENHRVRKKDLMVWIGNMLKNNMLQLDKSFYVQIAGIPQGHRLSSLLCCFYYGHLERTLIYPFLEEASKDVSSKECSREEELIIPTSYKLLRFIDDYLFVSTSRDQASSFYHRLKHGFKDYNCFMNETKFCINFEDKEEHRCSSNRMFVGDNGVPFVRWTGLLINSRTFEVQVDYTRYLSGHISSTFSVAWQNKPVRNLRQKLCYFLVPKCHPILFDSNINSGEIVRLNIYQIFLLAAMKFHCYVYEVSRFWKLHPQTLFKFITISVRYMFRLINRRVRRINTGSSFRPVLKLYKEEVIWLGLDAYIQVLKKKNSRYRMLLIYLKSALSKHSLSQQLSSELRYATDRSNSSSLWKLNY.

Disordered regions lie at residues Glu191–Lys242 and Gly410–Pro439. Residues Gln201–Ser210 are compositionally biased toward polar residues. One can recognise a Reverse transcriptase domain in the interval Leu596–Ile929. Residues Asp691, Asp860, and Asp861 each coordinate Mg(2+).

This sequence belongs to the reverse transcriptase family. Telomerase subfamily. Component of the telomerase ribonucleoprotein complex. Interacts with POT1A.

The protein localises to the nucleus. It localises to the chromosome. The protein resides in the telomere. It catalyses the reaction DNA(n) + a 2'-deoxyribonucleoside 5'-triphosphate = DNA(n+1) + diphosphate. Telomerase is a ribonucleoprotein enzyme essential for the replication of chromosome termini in most eukaryotes. It elongates telomeres. It is a reverse transcriptase that adds simple sequence repeats to chromosome ends by copying a template sequence within the RNA component of the enzyme. Required to prevent genome instability induced by breakage-fusion-bridge (BFB) cycles. Can extend completely non-telomeric sequences using RNA template in vitro. This chain is Telomerase reverse transcriptase (TERT), found in Arabidopsis thaliana (Mouse-ear cress).